The sequence spans 257 residues: Glutamate racemase (257 aa).

Residues 12-13 (DS) and 44-45 (YG) each bind substrate. The Proton donor/acceptor role is filled by Cys75. 76–77 (NT) contributes to the substrate binding site. The active-site Proton donor/acceptor is the Cys186. 187–188 (TH) is a substrate binding site.

The protein belongs to the aspartate/glutamate racemases family.

The catalysed reaction is L-glutamate = D-glutamate. It participates in cell wall biogenesis; peptidoglycan biosynthesis. Provides the (R)-glutamate required for cell wall biosynthesis. This is Glutamate racemase from Clostridium kluyveri (strain NBRC 12016).